Consider the following 444-residue polypeptide: Spermidine/putrescine import ATP-binding protein PotA (444 aa).

One can recognise an ABC transporter domain in the interval 11-332 (ISLVDVDKEF…PVNKWVANFI (322 aa)). 43 to 50 (GPSGSGKT) is a binding site for ATP. Residues 111–201 (RIKKKAEEIP…ESFKKKYLTR (91 aa)) are insert.

The protein belongs to the ABC transporter superfamily. Spermidine/putrescine importer (TC 3.A.1.11.1) family. As to quaternary structure, the complex is composed of two ATP-binding proteins (PotA), two transmembrane proteins (PotB and PotC) and a solute-binding protein (PotD).

It localises to the cell membrane. The catalysed reaction is ATP + H2O + polyamine-[polyamine-binding protein]Side 1 = ADP + phosphate + polyamineSide 2 + [polyamine-binding protein]Side 1.. Its function is as follows. Part of the ABC transporter complex PotABCD involved in spermidine/putrescine import. Responsible for energy coupling to the transport system. This is Spermidine/putrescine import ATP-binding protein PotA from Mesomycoplasma hyopneumoniae (strain 232) (Mycoplasma hyopneumoniae).